We begin with the raw amino-acid sequence, 518 residues long: Probable cytosol aminopeptidase (518 aa).

The Mn(2+) site is built by Lys-270 and Asp-275. The active site involves Lys-282. Residues Asp-293, Asp-352, and Glu-354 each contribute to the Mn(2+) site. Arg-356 is a catalytic residue. Residues 495–507 (SRTTRQPGSTGET) show a composition bias toward polar residues. A disordered region spans residues 495 to 518 (SRTTRQPGSTGETGSRKNRRKSKE).

This sequence belongs to the peptidase M17 family. Mn(2+) is required as a cofactor.

The protein resides in the cytoplasm. The enzyme catalyses Release of an N-terminal amino acid, Xaa-|-Yaa-, in which Xaa is preferably Leu, but may be other amino acids including Pro although not Arg or Lys, and Yaa may be Pro. Amino acid amides and methyl esters are also readily hydrolyzed, but rates on arylamides are exceedingly low.. It catalyses the reaction Release of an N-terminal amino acid, preferentially leucine, but not glutamic or aspartic acids.. In terms of biological role, presumably involved in the processing and regular turnover of intracellular proteins. Catalyzes the removal of unsubstituted N-terminal amino acids from various peptides. The polypeptide is Probable cytosol aminopeptidase (Nitrosospira multiformis (strain ATCC 25196 / NCIMB 11849 / C 71)).